The chain runs to 2157 residues: DExH-box ATP-dependent RNA helicase DExH14 (2157 aa).

The interval 374-394 (KAASNTQSRMPTYGTQVTVQT) is disordered. Residues 375–394 (AASNTQSRMPTYGTQVTVQT) show a composition bias toward polar residues. The Helicase ATP-binding 1 domain maps to 517–699 (QTVYHTNENI…FLRVNTDTGL (183 aa)). Residue 530 to 537 (APTGAGKT) coordinates ATP. The DEVH box signature appears at 641–644 (DEVH). The Helicase C-terminal 1 domain maps to 734–932 (CYKKVVDSIK…SLKDNLNAEV (199 aa)). An SEC63 1 domain is found at 1008-1315 (CTELGRVASH…LHAETYFTIS (308 aa)). Residues 1365 to 1540 (HVLYHTDNNV…WLGVGEIGLF (176 aa)) form the Helicase ATP-binding 2 domain. 1378 to 1385 (APTGSGKT) contacts ATP. The DEIH box signature appears at 1482 to 1485 (DEIH). Residues 1571 to 1780 (NKPAYAAICT…GTIGNKEDAV (210 aa)) enclose the Helicase C-terminal 2 domain. The region spanning 1839-2150 (PTMLGTIASQ…YLGFEQEHSI (312 aa)) is the SEC63 2 domain.

This sequence belongs to the DExH box helicase family.

It is found in the nucleus. It catalyses the reaction ATP + H2O = ADP + phosphate + H(+). In terms of biological role, RNA helicase that plays an essential role in pre-mRNA splicing as component of the U5 snRNP and U4/U6-U5 tri-snRNP complexes. Involved in spliceosome assembly, activation and disassembly. This Arabidopsis thaliana (Mouse-ear cress) protein is DExH-box ATP-dependent RNA helicase DExH14.